A 368-amino-acid chain; its full sequence is Cytochrome b-c1 complex subunit 2, mitochondrial (368 aa).

The N-terminal 16 residues, 1–16, are a transit peptide targeting the mitochondrion; sequence MLSAARLQFAQGSVRR. Phosphoserine is present on residues Ser141 and Ser168.

The protein belongs to the peptidase M16 family. UQCRC2/QCR2 subfamily. Component of the ubiquinol-cytochrome c oxidoreductase (cytochrome b-c1 complex, complex III, CIII), a multisubunit enzyme composed of 10 subunits. The complex is composed of 3 respiratory subunits cytochrome b (COB), cytochrome c1 (CYT1) and Rieske protein (RIP1), 2 core protein subunits COR1 and QCR2, and 5 low-molecular weight protein subunits QCR6, QCR7, QCR8, QCR9 and QCR10. The complex exists as an obligatory dimer and forms supercomplexes (SCs) in the inner mitochondrial membrane with a monomer or a dimer of cytochrome c oxidase (complex IV, CIV), resulting in 2 different assemblies (supercomplexes III(2)IV and III(2)IV(2)).

It is found in the mitochondrion inner membrane. Functionally, component of the ubiquinol-cytochrome c oxidoreductase, a multisubunit transmembrane complex that is part of the mitochondrial electron transport chain which drives oxidative phosphorylation. The respiratory chain contains 3 multisubunit complexes succinate dehydrogenase (complex II, CII), ubiquinol-cytochrome c oxidoreductase (cytochrome b-c1 complex, complex III, CIII) and cytochrome c oxidase (complex IV, CIV), that cooperate to transfer electrons derived from NADH and succinate to molecular oxygen, creating an electrochemical gradient over the inner membrane that drives transmembrane transport and the ATP synthase. The cytochrome b-c1 complex catalyzes electron transfer from ubiquinol to cytochrome c, linking this redox reaction to translocation of protons across the mitochondrial inner membrane, with protons being carried across the membrane as hydrogens on the quinol. In the process called Q cycle, 2 protons are consumed from the matrix, 4 protons are released into the intermembrane space and 2 electrons are passed to cytochrome c. The sequence is that of Cytochrome b-c1 complex subunit 2, mitochondrial (QCR2) from Saccharomyces cerevisiae (strain ATCC 204508 / S288c) (Baker's yeast).